A 479-amino-acid polypeptide reads, in one-letter code: Galactosylgalactosylxylosylprotein 3-beta-glucuronosyltransferase P (479 aa).

Topologically, residues M1–K34 are cytoplasmic. The helical; Signal-anchor for type II membrane protein transmembrane segment at M35–L50 threads the bilayer. Topologically, residues Y51–P479 are lumenal. N90, N97, N98, and N271 each carry an N-linked (GlcNAc...) asparagine glycan. Low complexity predominate over residues N94–T120. The segment at N94–G122 is disordered. Residue D335 participates in Mn(2+) binding. The active-site Proton acceptor is E418. A glycan (N-linked (GlcNAc...) asparagine) is linked at N460.

The protein belongs to the glycosyltransferase 43 family. The cofactor is Mn(2+).

The protein resides in the golgi apparatus membrane. The catalysed reaction is 3-O-(beta-D-galactosyl-(1-&gt;3)-beta-D-galactosyl-(1-&gt;4)-beta-D-xylosyl)-L-seryl-[protein] + UDP-alpha-D-glucuronate = 3-O-(beta-D-GlcA-(1-&gt;3)-beta-D-Gal-(1-&gt;3)-beta-D-Gal-(1-&gt;4)-beta-D-Xyl)-L-seryl-[protein] + UDP + H(+). Its pathway is protein modification; protein glycosylation. Involved in the biosynthesis of L2/HNK-1 carbohydrate epitope on both glycolipids and glycoproteins. Enzyme has a broad specificity. The sequence is that of Galactosylgalactosylxylosylprotein 3-beta-glucuronosyltransferase P (GlcAT-P) from Drosophila melanogaster (Fruit fly).